A 446-amino-acid polypeptide reads, in one-letter code: T-box transcription factor TBX20 (446 aa).

Positions Ser-50 to Cys-80 are disordered. Positions Leu-108–Asp-287 form a DNA-binding region, T-box.

Its subcellular location is the nucleus. Functionally, transcriptional regulator that may play a very early role in the differentiation of the cardiac precursors. The protein is T-box transcription factor TBX20 (tbx20) of Danio rerio (Zebrafish).